A 515-amino-acid polypeptide reads, in one-letter code: Fatty acyl-CoA reductase 1 (515 aa).

Residues 1–465 (MLSIPEFYQG…ARKHLNKLRN (465 aa)) lie on the Cytoplasmic side of the membrane. Residues 466–484 (IRYGFNTILVVLIWRVFIA) form a helical membrane-spanning segment. Over 485-515 (RSQMARNIWYFVVSMCFKFLSYFRASSTMRY) the chain is Peroxisomal.

Belongs to the fatty acyl-CoA reductase family.

The protein localises to the peroxisome membrane. It catalyses the reaction a long-chain fatty acyl-CoA + 2 NADPH + 2 H(+) = a long-chain primary fatty alcohol + 2 NADP(+) + CoA. The catalysed reaction is hexadecanoyl-CoA + 2 NADPH + 2 H(+) = hexadecan-1-ol + 2 NADP(+) + CoA. It carries out the reaction octadecanoyl-CoA + 2 NADPH + 2 H(+) = octadecan-1-ol + 2 NADP(+) + CoA. The enzyme catalyses (9Z)-octadecenoyl-CoA + 2 NADPH + 2 H(+) = (9Z)-octadecen-1-ol + 2 NADP(+) + CoA. It catalyses the reaction (9Z,12Z)-octadecadienoyl-CoA + 2 NADPH + 2 H(+) = (9Z,12Z)-octadecadien-1-ol + 2 NADP(+) + CoA. The catalysed reaction is eicosanoyl-CoA + 2 NADPH + 2 H(+) = eicosan-1-ol + 2 NADP(+) + CoA. It carries out the reaction 16-methylheptadecanoyl-CoA + 2 NADPH + 2 H(+) = 16-methylheptadecan-1-ol + 2 NADP(+) + CoA. The enzyme catalyses 18-methylnonadecanoyl-CoA + 2 NADPH + 2 H(+) = 18-methylnonadecan-1-ol + 2 NADP(+) + CoA. Functionally, catalyzes the reduction of saturated and unsaturated C16 or C18 fatty acyl-CoA to fatty alcohols. It plays an essential role in the production of ether lipids/plasmalogens which synthesis requires fatty alcohols. In parallel, it is also required for wax monoesters production since fatty alcohols also constitute a substrate for their synthesis. This is Fatty acyl-CoA reductase 1 (far1) from Xenopus laevis (African clawed frog).